The sequence spans 130 residues: Protein ApaG (130 aa).

Positions 3–127 constitute an ApaG domain; that stretch reads SQTTRDIEVT…FSLDSPHEKP (125 aa).

In Paramagnetospirillum magneticum (strain ATCC 700264 / AMB-1) (Magnetospirillum magneticum), this protein is Protein ApaG.